The following is a 519-amino-acid chain: Cytochrome P450 monooxygenase FPY7 (519 aa).

A helical membrane pass occupies residues 12 to 34 (SLSLRWKIIVTLLAIYTLRIIGT). Cys-465 is a heme binding site.

It belongs to the cytochrome P450 family. Heme is required as a cofactor.

It localises to the membrane. The protein operates within secondary metabolite biosynthesis. Its function is as follows. Cytochrome P450 monooxygenase; part of the gene cluster that mediates the biosynthesis of the gamma-pyrones fusapyrone (FPY) and deoxyfusapyrone (dFPY). FPY is an undecaketide and thus likely synthesized by the polyketide synthase FPY1 from acetyl-CoA functioning as starter unit and the addition of 10 malonyl-CoA extender units by successive Claisen-condensations. Next to this, FPY shares some rare features: C-glycosylated 4-deoxyglucose at C-3, a gem-dimethyl group at C-13, and an alpha-beta to beta-gamma double bond shift at C-20. During FPY biosynthesis mono-C-methyl groups are transferred to the tetra-, penta-, hexa- and heptaketide, while two C-methyl groups are transferred to the nonaketide, suggesting that the CMet domain is programmed to selectively catalyze two successive C-alpha-methylation reactions of the nonaketide, while other alpha-carbons are non- or mono-methylated only. While the origin of the 4'-deoxyglucose moiety remains opaque, its transfer to C-3 is most likely mediated by the C-glycosyltransferase FPY2. Next to this, the hydroxyl group present at C-33 and discriminating between FPY and dFPY, is likely to be installed by the cytochrome P450 monooxygenase FPY7. No putative function can be predicted for the remaining genes FPY3-FPY6. The sequence is that of Cytochrome P450 monooxygenase FPY7 from Fusarium mangiferae (Mango malformation disease fungus).